We begin with the raw amino-acid sequence, 419 residues long: L-rhamnose isomerase (419 aa).

Residues His262, Asp294, and Asp296 each coordinate Mn(2+).

It belongs to the rhamnose isomerase family. In terms of assembly, homotetramer. Mn(2+) is required as a cofactor.

It localises to the cytoplasm. The catalysed reaction is L-rhamnopyranose = L-rhamnulose. Its pathway is carbohydrate degradation; L-rhamnose degradation; glycerone phosphate from L-rhamnose: step 1/3. Functionally, catalyzes the interconversion of L-rhamnose and L-rhamnulose. This is L-rhamnose isomerase from Shigella sonnei (strain Ss046).